Here is a 1482-residue protein sequence, read N- to C-terminus: MHKLIIKYNKQLKMLNLRDGKTYTISEDERADITLKSLGEVIHLEQNNQGTWQANHTSINKVLVRKGDLDDITLQLYTEADYASFAYPSIQDTMTIGSNAYDDMVIQSLMNAIIIKDFQSIQETQYVRIVHDKNTDVYINYELQEQLTNKAYIGDHIYVEGIWLEVQADGLNVLSQNTVASSLIRLTQEMPHAQADDYNTYHRSPRIIHREPTDDIKIERPPQPIQKNNTVIWRSIIPPLVMIALTVVIFLVRPIGIYILMMIGMSTVTIVFGITTYFSEKKKYNKDVEKREKDYKAYLDNKSKEINKAIKAQRFSLNYHYPTVAEIKDIVETKAPRIYEKTSHHHDFLHYKLGIANVEKSFKLDYQEEEFNQRRDELFDDAKELYEFYTDVEQAPLINDLNHGPIAYIGARHLILEELEKMLIQLSTFHSYHDLEFLFVTREDEVETLKWARWLPHMTLRGQNIRGFVYNQRTRDQILTSIYSMIKERIQAVRERSRSNEQIIFTPQLVFVITDMSLIIDHVILEYVNQDLSEYGISLIFVEDVIESLPEHVDTIIDIKSRTEGELITKEKELVQLKFTPENIDNVDKEYIARRLANLIHVEHLKNAIPDSITFLEMYNVKEVDQLDVVNRWRQNETYKTMAVPLGVRGKDDILSLNLHEKAHGPHGLVAGTTGSGKSEIIQSYILSLAINFHPHEVAFLLIDYKGGGMANLFKDLVHLVGTITNLDGDEAMRALTSIKAELRKRQRLFGEHDVNHINQYHKLFKEGVATEPMPHLFIISDEFAELKSEQPDFMKELVSTARIGRSLGIHLILATQKPSGVVDDQIWSNSKFKLALKVQDRQDSNEILKTPDAADITLPGRAYLQVGNNEIYELFQSAWSGATYDIEGDKLEVEDKTIYMINDYGQLQAINKDLSGLEDEETKENQTELEAVIDHIESITTRLEIEEVKRPWLPPLPENVYQEDLVETDFRKLWSDDAKEVELTLGLKDVPEEQYQGPMVLQLKKAGHIALIGSPGYGRTTFLHNIIFDVARHHRPDQAHMYLFDFGTNGLMPVTDIPHVADYFTVDQEDKIAKAIRKIHDIISERKRLLSQERVVNIEQYNKETGNSIPNVFLIIDNYDTVKESPFMEEYEEMMSKVTREGLALGVYIILSGSRSSAIKSAIFTNIKTRVALYLFENNELTNIIGSYKKGVKDVKGRAAINDDNFTQFQIAQPFELAEGQTYNERIKNEVAQMKEFYVGDYPKHIPMMPDKVFMEDIREAYDLEKIIHEEHKLPLGLDFEDVELVSLDLTSSSIVTAIKPTEMEKMNDVIMSSLSVYSKNQFVILVDAEDNMSQYSEDVTSYYSAPSDLSNIRLGFKQEIEARKNGEKSIEECKIVFINNIKRFNQLTGMTEDEIRVLFNEGQKVNIIIIASGLYSDTIGAFDRESKMMVRTINQALISHKISEQEFIRVKDRFGEPELKVGEMYYINNQEYQKIKLMEG.

At 1–229 (MHKLIIKYNK…RPPQPIQKNN (229 aa)) the chain is on the cytoplasmic side. A helical transmembrane segment spans residues 230-252 (TVIWRSIIPPLVMIALTVVIFLV). Residues 253–256 (RPIG) are Extracellular-facing. A helical membrane pass occupies residues 257–279 (IYILMMIGMSTVTIVFGITTYFS). At 280–1482 (EKKKYNKDVE…EYQKIKLMEG (1203 aa)) the chain is on the cytoplasmic side. 2 consecutive FtsK domains span residues 652–846 (DDIL…QDSN) and 997–1183 (QGPM…NELT). Residues 672-679 (GTTGSGKS) and 1014-1021 (GSPGYGRT) each bind ATP.

This sequence belongs to the EssC family. In terms of assembly, homooligomer. Interacts with EsaE.

Its subcellular location is the cell membrane. Its function is as follows. Component of the type VII secretion system (Ess). Required for the secretion of substrates including EsxA and EsxB. However, unable to support secretion of the substrate protein EsxC. The sequence is that of Type VII secretion system protein EssC from Staphylococcus aureus (strain MRSA252).